Here is a 453-residue protein sequence, read N- to C-terminus: MLKRKVRYLLLIVVVFTGIILSVEAIMRFQLNKNVDYYLKFFDKHKDNIENMYDPLNIKQIPYSTIDQLYTKRQSEAEPIDWDKFAYVNYITDFEYLCNTLIQFRKLNDSGSKAKLLALVTDTLVNKSKENKEVEALLNKIKSVSDRVAVTEVGSVIQPNDHTPWSKSLTKLAIFNLTDYERIIYMDNDAIIHDKMDELFFLPSYVKFAAPISYWFVTADDLRTVSTDTKKLFKTNKLDPIEKKLASRVKNSLEIYNHLPNLPQHFYSKSMNFIIDIDGFQKSDNKVNFATHLMVIKPDVTMANDIRDNILPRYLKAKEEYDTDLINEELYNFKELIYYQFKIFRKIQYLFKPSVLILPYTKYGLLTKSIDDKRQKDLLKNAILGYERKEKDDLIQDAKFIHFSDYPLSKPWFYSNADDIQCSKKYSISDENCQLWKSLYKEYLESRAICQVN.

Residues 1 to 8 (MLKRKVRY) lie on the Cytoplasmic side of the membrane. Residues 9-29 (LLLIVVVFTGIILSVEAIMRF) form a helical; Signal-anchor for type II membrane protein membrane-spanning segment. Residues 30–453 (QLNKNVDYYL…LESRAICQVN (424 aa)) are Lumenal-facing. Asn-108, Asn-126, and Asn-176 each carry an N-linked (GlcNAc...) asparagine glycan. Residues 187-189 (DND) carry the DXD motif.

This sequence belongs to the GNT1 family.

It localises to the golgi apparatus membrane. The protein localises to the vacuole membrane. Its function is as follows. N-acetylglucosaminyltransferase involved in the Golgi-specific modification of N-linked glycans. The sequence is that of Glucose N-acetyltransferase 1-B (GNT1-B) from Kluyveromyces lactis (strain ATCC 8585 / CBS 2359 / DSM 70799 / NBRC 1267 / NRRL Y-1140 / WM37) (Yeast).